We begin with the raw amino-acid sequence, 178 residues long: Crossover junction endodeoxyribonuclease RuvC (178 aa).

Catalysis depends on residues D11, E71, and D143. Residues D11, E71, and D143 each coordinate Mg(2+).

It belongs to the RuvC family. In terms of assembly, homodimer which binds Holliday junction (HJ) DNA. The HJ becomes 2-fold symmetrical on binding to RuvC with unstacked arms; it has a different conformation from HJ DNA in complex with RuvA. In the full resolvosome a probable DNA-RuvA(4)-RuvB(12)-RuvC(2) complex forms which resolves the HJ. Mg(2+) is required as a cofactor.

The protein resides in the cytoplasm. The catalysed reaction is Endonucleolytic cleavage at a junction such as a reciprocal single-stranded crossover between two homologous DNA duplexes (Holliday junction).. Its function is as follows. The RuvA-RuvB-RuvC complex processes Holliday junction (HJ) DNA during genetic recombination and DNA repair. Endonuclease that resolves HJ intermediates. Cleaves cruciform DNA by making single-stranded nicks across the HJ at symmetrical positions within the homologous arms, yielding a 5'-phosphate and a 3'-hydroxyl group; requires a central core of homology in the junction. The consensus cleavage sequence is 5'-(A/T)TT(C/G)-3'. Cleavage occurs on the 3'-side of the TT dinucleotide at the point of strand exchange. HJ branch migration catalyzed by RuvA-RuvB allows RuvC to scan DNA until it finds its consensus sequence, where it cleaves and resolves the cruciform DNA. The chain is Crossover junction endodeoxyribonuclease RuvC from Neisseria meningitidis serogroup B (strain ATCC BAA-335 / MC58).